The following is a 220-amino-acid chain: Dual specificity phosphatase 29 (220 aa).

The 149-residue stretch at 54 to 202 (HVNEVWPKLY…LRELDKQLVQ (149 aa)) folds into the Tyrosine-protein phosphatase domain. 146–153 (HCVMGRSR) is a substrate binding site. Residue Cys-147 is the Phosphocysteine intermediate of the active site.

This sequence belongs to the protein-tyrosine phosphatase family. Non-receptor class dual specificity subfamily. In terms of assembly, homodimer. Interacts with PRKAA2.

It is found in the cytoplasm. The protein localises to the nucleus. It carries out the reaction O-phospho-L-tyrosyl-[protein] + H2O = L-tyrosyl-[protein] + phosphate. It catalyses the reaction O-phospho-L-seryl-[protein] + H2O = L-seryl-[protein] + phosphate. The enzyme catalyses O-phospho-L-threonyl-[protein] + H2O = L-threonyl-[protein] + phosphate. Functionally, dual specificity phosphatase able to dephosphorylate phosphotyrosine, phosphoserine and phosphothreonine residues within the same substrate, with a preference for phosphotyrosine as a substrate. Involved in the modulation of intracellular signaling cascades. In skeletal muscle regulates systemic glucose homeostasis by activating, AMPK, an energy sensor protein kinase. Affects MAP kinase signaling though modulation of the ERK1/2 cascade in skeletal muscle promoting muscle cell differentiation, development and atrophy. The polypeptide is Dual specificity phosphatase 29 (DUSP29) (Pan troglodytes (Chimpanzee)).